A 295-amino-acid chain; its full sequence is Small ribosomal subunit protein uS3 (295 aa).

The 69-residue stretch at 39–107 (VREYLKKKLK…PVAVNIEEVR (69 aa)) folds into the KH type-2 domain. A disordered region spans residues 213-295 (GTGAKMIEVA…AAAADGAKTE (83 aa)). A compositionally biased stretch (basic and acidic residues) spans 224–245 (EERKPRGPRRDARPGDRPDRGA). Composition is skewed to low complexity over residues 246–255 (PRGAPRAPRG) and 283–295 (AAPA…AKTE).

It belongs to the universal ribosomal protein uS3 family. Part of the 30S ribosomal subunit. Forms a tight complex with proteins S10 and S14.

Its function is as follows. Binds the lower part of the 30S subunit head. Binds mRNA in the 70S ribosome, positioning it for translation. The sequence is that of Small ribosomal subunit protein uS3 from Polaromonas naphthalenivorans (strain CJ2).